The primary structure comprises 314 residues: Serine/threonine-protein phosphatase PP2A-5 catalytic subunit (314 aa).

Mn(2+) contacts are provided by aspartate 62, histidine 64, aspartate 90, and asparagine 122. Histidine 123 acts as the Proton donor in catalysis. Histidine 172 and histidine 246 together coordinate Mn(2+).

It belongs to the PPP phosphatase family. PP-2A subfamily. The cofactor is Mn(2+).

It localises to the cytoplasm. It catalyses the reaction O-phospho-L-seryl-[protein] + H2O = L-seryl-[protein] + phosphate. The catalysed reaction is O-phospho-L-threonyl-[protein] + H2O = L-threonyl-[protein] + phosphate. The sequence is that of Serine/threonine-protein phosphatase PP2A-5 catalytic subunit (NPP5) from Nicotiana tabacum (Common tobacco).